The sequence spans 880 residues: Valine--tRNA ligase (880 aa).

The 'HIGH' region motif lies at 48 to 58 (PNVTGKLHLGH). The 'KMSKS' region signature appears at 524-528 (KMSKS). Lys-527 contacts ATP. Residues 808–879 (LAGLINIEEE…VKERIAQLRS (72 aa)) are a coiled coil.

This sequence belongs to the class-I aminoacyl-tRNA synthetase family. ValS type 1 subfamily. In terms of assembly, monomer.

The protein resides in the cytoplasm. It catalyses the reaction tRNA(Val) + L-valine + ATP = L-valyl-tRNA(Val) + AMP + diphosphate. Catalyzes the attachment of valine to tRNA(Val). As ValRS can inadvertently accommodate and process structurally similar amino acids such as threonine, to avoid such errors, it has a 'posttransfer' editing activity that hydrolyzes mischarged Thr-tRNA(Val) in a tRNA-dependent manner. The polypeptide is Valine--tRNA ligase (Enterococcus faecalis (strain ATCC 700802 / V583)).